The sequence spans 206 residues: Uridine kinase (206 aa).

9–16 provides a ligand contact to ATP; sequence GGSGSGKT.

It belongs to the uridine kinase family.

The protein localises to the cytoplasm. The catalysed reaction is uridine + ATP = UMP + ADP + H(+). It catalyses the reaction cytidine + ATP = CMP + ADP + H(+). The protein operates within pyrimidine metabolism; CTP biosynthesis via salvage pathway; CTP from cytidine: step 1/3. Its pathway is pyrimidine metabolism; UMP biosynthesis via salvage pathway; UMP from uridine: step 1/1. The polypeptide is Uridine kinase (Borrelia turicatae (strain 91E135)).